A 310-amino-acid chain; its full sequence is Methionyl-tRNA formyltransferase (310 aa).

110-113 (SLLP) lines the (6S)-5,6,7,8-tetrahydrofolate pocket.

This sequence belongs to the Fmt family.

It carries out the reaction L-methionyl-tRNA(fMet) + (6R)-10-formyltetrahydrofolate = N-formyl-L-methionyl-tRNA(fMet) + (6S)-5,6,7,8-tetrahydrofolate + H(+). Functionally, attaches a formyl group to the free amino group of methionyl-tRNA(fMet). The formyl group appears to play a dual role in the initiator identity of N-formylmethionyl-tRNA by promoting its recognition by IF2 and preventing the misappropriation of this tRNA by the elongation apparatus. This chain is Methionyl-tRNA formyltransferase, found in Halorhodospira halophila (strain DSM 244 / SL1) (Ectothiorhodospira halophila (strain DSM 244 / SL1)).